A 1280-amino-acid chain; its full sequence is Dynactin subunit 1 (1280 aa).

Residues 1–26 (MAQSKRHMYNRTPSGSRMSTEASARP) form a disordered region. Positions 11-22 (RTPSGSRMSTEA) are enriched in polar residues. The 43-residue stretch at 48-90 (GATLFATGKWVGVILDEAKGKNDGTVQGRKYFTCDEGHGIFVR) folds into the CAP-Gly domain. The disordered stretch occupies residues 99–223 (DGADTTSPET…SKEEEGLRDQ (125 aa)). The segment covering 102–114 (DTTSPETPDSSAS) has biased composition (polar residues). 4 positions are modified to phosphothreonine: Thr-108, Thr-145, Thr-146, and Thr-147. The span at 129–152 (SKLRGLKPKKAPTARKTTTRRPKP) shows a compositional bias: basic residues. Low complexity predominate over residues 161 to 205 (AGPSSSLGPSGSASAGELSSSEPSTPAQTPLAAPIIPTPALTSPG). A Phosphoserine; by PLK1 modification is found at Ser-179. Position 212 is a phosphoserine; by CDK1 (Ser-212). Positions 214-223 (SKEEEGLRDQ) are enriched in basic and acidic residues. Coiled coils occupy residues 214-513 (SKEE…ADYQ) and 942-1048 (LKLE…EGLR). The tract at residues 910–1280 (EYDAERPPSK…LHQLHGRLIS (371 aa)) is interaction with HPS6. The tract at residues 1064 to 1089 (GEEQQRGGTPGQAPGALPGPGPVKDS) is disordered. A coiled-coil region spans residues 1184–1213 (SAQLMEQVAQLKSLSDTIEKLKDEVLKETV).

The protein belongs to the dynactin 150 kDa subunit family. In terms of assembly, monomer and homodimer. Subunit of dynactin, a multiprotein complex part of a tripartite complex with dynein and a adapter, such as BICDL1, BICD2 or HOOK3. The dynactin complex is built around ACTR1A/ACTB filament and consists of an actin-related filament composed of a shoulder domain, a pointed end and a barbed end. Its length is defined by its flexible shoulder domain. The soulder is composed of 2 DCTN1 subunits, 4 DCTN2 and 2 DCTN3. DCTN1/p150(glued) binds directly to microtubules and to cytoplasmic dynein. The 4 DCNT2 (via N-terminus) bind the ACTR1A filament and act as molecular rulers to determine the length. The pointed end is important for binding dynein-dynactin cargo adapters. Consists of 4 subunits: ACTR10, DCNT4, DCTN5 and DCTN6. The barbed end is composed of a CAPZA1:CAPZB heterodimers, which binds ACTR1A/ACTB filament and dynactin and stabilizes dynactin. Interacts with the C-terminus of MAPRE1, MAPRE2 and MAPRE3. Interacts (via C-terminus) with SNX6. Interacts with CLN3, DYNAP, ECPAS and FBXL5. Interacts with MISP; this interaction regulates its distribution at the cell cortex. Interacts with CEP131. Interacts with CEP126. Interacts with CLIP1. Interacts with dynein intermediate chain and dynein heavy chain. Interacts with PLK1 (via POLO-box domain). Interacts with TBCB. Binds preferentially to tyrosinated microtubules than to detyrosinated microtubules. Interacts with PARD6A. Interacts with HPS6. Interacts with KIF3A. Interacts with BICD2. Interacts with DST (isoform 9). Interacts with DST (isoform 1). Identified in a complex with MREG and RILP. Interacts with BCCIP (isoform 2/alpha). Interacts with DCDC1. Interacts with AKNA. Interacts with DYNC1I2. Interacts with RUFY3 and RUFY4. Post-translationally, ubiquitinated by a SCF complex containing FBXL5, leading to its degradation by the proteasome. Phosphorylation by SLK at Thr-145, Thr-146 and Thr-147 targets DCTN1 to the centrosome. It is uncertain if SLK phosphorylates all three threonines or one or two of them. PLK1-mediated phosphorylation at Ser-179 is essential for its localization in the nuclear envelope and promotes its dissociation from microtubules during early mitosis and positively regulates nuclear envelope breakdown during prophase. In terms of tissue distribution, ubiquitous with a high level expression observed in the brain (at protein level).

Its subcellular location is the cytoplasm. The protein resides in the cytoskeleton. The protein localises to the microtubule organizing center. It is found in the centrosome. It localises to the centriole. Its subcellular location is the spindle. The protein resides in the nucleus envelope. The protein localises to the cell cortex. Its function is as follows. Part of the dynactin complex that activates the molecular motor dynein for ultra-processive transport along microtubules. Plays a key role in dynein-mediated retrograde transport of vesicles and organelles along microtubules by recruiting and tethering dynein to microtubules. Binds to both dynein and microtubules providing a link between specific cargos, microtubules and dynein. Essential for targeting dynein to microtubule plus ends, recruiting dynein to membranous cargos and enhancing dynein processivity (the ability to move along a microtubule for a long distance without falling off the track). Can also act as a brake to slow the dynein motor during motility along the microtubule. Can regulate microtubule stability by promoting microtubule formation, nucleation and polymerization and by inhibiting microtubule catastrophe in neurons. Inhibits microtubule catastrophe by binding both to microtubules and to tubulin, leading to enhanced microtubule stability along the axon. Plays a role in metaphase spindle orientation. Plays a role in centriole cohesion and subdistal appendage organization and function. Its recruitment to the centriole in a KIF3A-dependent manner is essential for the maintenance of centriole cohesion and the formation of subdistal appendage. Also required for microtubule anchoring at the mother centriole. Plays a role in primary cilia formation. This is Dynactin subunit 1 (Dctn1) from Rattus norvegicus (Rat).